The following is a 178-amino-acid chain: Protein GrpE (178 aa).

Belongs to the GrpE family. In terms of assembly, homodimer.

It localises to the cytoplasm. In terms of biological role, participates actively in the response to hyperosmotic and heat shock by preventing the aggregation of stress-denatured proteins, in association with DnaK and GrpE. It is the nucleotide exchange factor for DnaK and may function as a thermosensor. Unfolded proteins bind initially to DnaJ; upon interaction with the DnaJ-bound protein, DnaK hydrolyzes its bound ATP, resulting in the formation of a stable complex. GrpE releases ADP from DnaK; ATP binding to DnaK triggers the release of the substrate protein, thus completing the reaction cycle. Several rounds of ATP-dependent interactions between DnaJ, DnaK and GrpE are required for fully efficient folding. This chain is Protein GrpE, found in Rickettsia akari (strain Hartford).